A 409-amino-acid chain; its full sequence is Tryptophan synthase beta chain (409 aa).

Lys-95 bears the N6-(pyridoxal phosphate)lysine mark.

This sequence belongs to the TrpB family. In terms of assembly, tetramer of two alpha and two beta chains. It depends on pyridoxal 5'-phosphate as a cofactor.

It catalyses the reaction (1S,2R)-1-C-(indol-3-yl)glycerol 3-phosphate + L-serine = D-glyceraldehyde 3-phosphate + L-tryptophan + H2O. Its pathway is amino-acid biosynthesis; L-tryptophan biosynthesis; L-tryptophan from chorismate: step 5/5. Its function is as follows. The beta subunit is responsible for the synthesis of L-tryptophan from indole and L-serine. This chain is Tryptophan synthase beta chain, found in Pseudomonas syringae pv. tomato (strain ATCC BAA-871 / DC3000).